Consider the following 526-residue polypeptide: Rho guanine nucleotide exchange factor 3 (526 aa).

The interval 20–40 (ELPPASGPAKDAEEPSNKRVK) is disordered. Phosphoserine occurs at positions 47 and 70. The DH domain maps to 122–304 (KRQEAIFELS…QGIVAEINTK (183 aa)). In terms of domain architecture, PH spans 291–449 (INIIQGIVAE…WLNCIRQAKE (159 aa)). The disordered stretch occupies residues 464 to 526 (EGSFLNPTTG…GNSRHGESNV (63 aa)). Residues 466 to 475 (SFLNPTTGSR) show a composition bias toward polar residues.

Interacts with RHOA and RHOB. In terms of tissue distribution, widely expressed. Highest levels are found in adult brain and skeletal muscle. Lower levels are found in heart and kidney.

Its subcellular location is the cytoplasm. Its function is as follows. Acts as a guanine nucleotide exchange factor (GEF) for RhoA and RhoB GTPases. This Homo sapiens (Human) protein is Rho guanine nucleotide exchange factor 3 (ARHGEF3).